The primary structure comprises 572 residues: Phosphoenolpyruvate-protein phosphotransferase (572 aa).

Histidine 191 serves as the catalytic Tele-phosphohistidine intermediate. Residues arginine 298 and arginine 334 each coordinate phosphoenolpyruvate. Mg(2+)-binding residues include glutamate 433 and aspartate 457. Phosphoenolpyruvate is bound by residues asparagine 456 to aspartate 457 and arginine 467. Cysteine 504 acts as the Proton donor in catalysis.

The protein belongs to the PEP-utilizing enzyme family. In terms of assembly, homodimer. It depends on Mg(2+) as a cofactor.

Its subcellular location is the cytoplasm. The enzyme catalyses L-histidyl-[protein] + phosphoenolpyruvate = N(pros)-phospho-L-histidyl-[protein] + pyruvate. Its function is as follows. General (non sugar-specific) component of the phosphoenolpyruvate-dependent sugar phosphotransferase system (sugar PTS). This major carbohydrate active-transport system catalyzes the phosphorylation of incoming sugar substrates concomitantly with their translocation across the cell membrane. Enzyme I transfers the phosphoryl group from phosphoenolpyruvate (PEP) to the phosphoryl carrier protein (HPr). This chain is Phosphoenolpyruvate-protein phosphotransferase (ptsI), found in Staphylococcus epidermidis (strain ATCC 35984 / DSM 28319 / BCRC 17069 / CCUG 31568 / BM 3577 / RP62A).